The primary structure comprises 4639 residues: Dynein heavy chain, cytoplasmic (4639 aa).

A stem region spans residues 1–1856 (MGDSLENPDT…TIHMANARFF (1856 aa)). 3 coiled-coil regions span residues 530–565 (LDIT…LRDQ), 774–794 (SLIE…DRAS), and 1264–1368 (DDAL…ARLR). AAA regions lie at residues 1857 to 2084 (YGFE…VLIS), 2166 to 2437 (EEIR…FTRL), 2541 to 2790 (EVET…WVRG), and 2884 to 3153 (VFYE…GGRT). ATP-binding positions include 1895–1902 (GPAGTGKT), 2210–2217 (GPSGSGKS), 2580–2587 (GPPGSGKT), and 2922–2929 (GVSGAGKT). 3 coiled-coil regions span residues 3189 to 3261 (GLNK…EKRK), 3382 to 3478 (AIAQ…WEST), and 3723 to 3782 (EFRL…EIET). The tract at residues 3189–3478 (GLNKIAETVE…NIERERWEST (290 aa)) is stalk. AAA regions lie at residues 3539–3768 (LSNP…DINQ) and 3989–4205 (AHNV…TLDT).

Belongs to the dynein heavy chain family. In terms of assembly, consists of at least two heavy chains and a number of intermediate and light chains.

It is found in the cytoplasm. Its subcellular location is the cytoskeleton. Cytoplasmic dynein acts as a motor for the intracellular retrograde motility of vesicles and organelles along microtubules. Dynein has ATPase activity; the force-producing power stroke is thought to occur on release of ADP. This chain is Dynein heavy chain, cytoplasmic (Dhc64C), found in Drosophila melanogaster (Fruit fly).